A 230-amino-acid polypeptide reads, in one-letter code: 7-cyano-7-deazaguanine synthase (230 aa).

Residue 8 to 18 (LSGGMDSAVVT) coordinates ATP. Residues cysteine 186, cysteine 196, cysteine 199, and cysteine 202 each coordinate Zn(2+).

Belongs to the QueC family. The cofactor is Zn(2+).

It carries out the reaction 7-carboxy-7-deazaguanine + NH4(+) + ATP = 7-cyano-7-deazaguanine + ADP + phosphate + H2O + H(+). It functions in the pathway purine metabolism; 7-cyano-7-deazaguanine biosynthesis. Catalyzes the ATP-dependent conversion of 7-carboxy-7-deazaguanine (CDG) to 7-cyano-7-deazaguanine (preQ(0)). The protein is 7-cyano-7-deazaguanine synthase of Xylella fastidiosa (strain M12).